Here is a 191-residue protein sequence, read N- to C-terminus: Putative inactive glutathione hydrolase 4 (191 aa).

Catalysis depends on Thr-54, which acts as the Nucleophile. Residues Thr-72, Asn-74, Glu-93, Asp-96, Ser-126–Ser-127, and Gly-147–Gly-148 each bind L-glutamate.

Belongs to the gamma-glutamyltransferase family. As to expression, expressed at low levels in embryo, roots and leaves. In mature plants, expression is restricted to vascular tissues of roots, leaves, flowers and siliques.

The sequence is that of Putative inactive glutathione hydrolase 4 (GGT4) from Arabidopsis thaliana (Mouse-ear cress).